The following is a 363-amino-acid chain: Putative agmatine deiminase (363 aa).

A compositionally biased stretch (polar residues) spans 1-10; the sequence is MTKQLSTSPK. A disordered region spans residues 1 to 20; it reads MTKQLSTSPKQDGFRMPAEH. Cys355 functions as the Amidino-cysteine intermediate in the catalytic mechanism.

It belongs to the agmatine deiminase family.

It catalyses the reaction agmatine + H2O = N-carbamoylputrescine + NH4(+). The chain is Putative agmatine deiminase from Photobacterium profundum (strain SS9).